Consider the following 198-residue polypeptide: Ribosomal RNA small subunit methyltransferase G (198 aa).

Residues glycine 74, phenylalanine 79, 123–124 (IQ), and arginine 136 each bind S-adenosyl-L-methionine.

It belongs to the methyltransferase superfamily. RNA methyltransferase RsmG family.

It localises to the cytoplasm. The catalysed reaction is guanosine(527) in 16S rRNA + S-adenosyl-L-methionine = N(7)-methylguanosine(527) in 16S rRNA + S-adenosyl-L-homocysteine. Its function is as follows. Specifically methylates the N7 position of guanine in position 527 of 16S rRNA. The sequence is that of Ribosomal RNA small subunit methyltransferase G from Orientia tsutsugamushi (strain Boryong) (Rickettsia tsutsugamushi).